The following is a 235-amino-acid chain: Transcriptional regulatory protein MalR (235 aa).

Positions 3–119 constitute a Response regulatory domain; it reads NVLIVEDDPM…RFQTALSDYR (117 aa). Asp-54 bears the 4-aspartylphosphate mark. Positions 178–197 form a DNA-binding region, H-T-H motif; it reads TEDLAKHTEISQVSIRKYLK.

Phosphorylated and activated by MalK.

Its subcellular location is the cytoplasm. Functionally, member of a two-component regulatory system MalK/MalR. Activates transcription of maeA, maeN and yflS in presence of malate by binding to their promoter region. The polypeptide is Transcriptional regulatory protein MalR (malR) (Bacillus subtilis (strain 168)).